The sequence spans 411 residues: uncharacterized protein (411 aa).

Disordered stretches follow at residues 1–91 and 253–280; these read METP…QDEE and KGPLARRNEEDENKPQEKRPRAVTAYSP. The segment covering 46–57 has biased composition (acidic residues); the sequence is ETTESADSENDM. Low complexity predominate over residues 74–86; it reads SNESFSSNQSTES. Residues 258–272 are compositionally biased toward basic and acidic residues; the sequence is RRNEEDENKPQEKRP. Ser-279 is subject to Phosphoserine.

In terms of tissue distribution, widely expressed, highest levels in cerebellum, brain cortex, hippocampus, pons, putamen and amygdala. Highly expressed in neurons, but also present in glial cells. Slightly higher expression in the dorsolateral prefrontal cortex of schizophrenic patients compared to control individuals.

Its subcellular location is the cytoplasm. This is an uncharacterized protein from Homo sapiens (Human).